We begin with the raw amino-acid sequence, 1097 residues long: DNA-directed RNA polymerase subunit beta (1097 aa).

The interval Gln1072–Asp1097 is disordered. Residues Arg1077–Thr1091 are compositionally biased toward polar residues.

Belongs to the RNA polymerase beta chain family. In terms of assembly, in cyanobacteria the RNAP catalytic core is composed of 2 alpha, 1 beta, 1 beta', 1 gamma and 1 omega subunit. When a sigma factor is associated with the core the holoenzyme is formed, which can initiate transcription.

The catalysed reaction is RNA(n) + a ribonucleoside 5'-triphosphate = RNA(n+1) + diphosphate. DNA-dependent RNA polymerase catalyzes the transcription of DNA into RNA using the four ribonucleoside triphosphates as substrates. The sequence is that of DNA-directed RNA polymerase subunit beta from Prochlorococcus marinus (strain AS9601).